The chain runs to 37 residues: Potassium channel toxin alpha-KTx 15.1 (37 aa).

Pyrrolidone carboxylic acid is present on Gln-1. 3 disulfide bridges follow: Cys-8–Cys-28, Cys-13–Cys-33, and Cys-17–Cys-35.

This sequence belongs to the short scorpion toxin superfamily. Potassium channel inhibitor family. Alpha-KTx 15 subfamily. Expressed by the venom gland.

It is found in the secreted. Functionally, blocker of voltage-gated potassium channels (600 nM of the toxin induces a block of 25% of hERG currents). May also inhibit Kv4/KCND when coexpressed with DPP6 or DPP10. In adult rat brain, it blocks the transient potassium channels in cerebellum granular cells. Blocks potassium channels by a simple 'plugging mechanism', in which a single toxin molecule finds a specific receptor site in the external vestibule of the potassium channel and thereby occludes the outer entry to the potassium conducting pore. This chain is Potassium channel toxin alpha-KTx 15.1, found in Androctonus australis (Sahara scorpion).